The sequence spans 89 residues: Envelope glycoprotein N (89 aa).

The N-terminal stretch at 1-24 (MAPGRGVLLLICLCLMDNVSQVVC) is a signal peptide. The Virion surface segment spans residues 25-56 (SQNSTTPSKFPTFYSYDCNADTYAPQLTSFST). Residues 57–77 (IWTLLNVLVMTIACVIYLIYM) form a helical membrane-spanning segment. Over 78–89 (CFNKFVATMTNT) the chain is Intravirion.

This sequence belongs to the herpesviridae glycoprotein N family. Interacts (via N-terminus) with gM (via N-terminus). The gM-gN heterodimer forms the gCII complex.

It is found in the virion membrane. The protein localises to the host membrane. It localises to the host Golgi apparatus. Its subcellular location is the host trans-Golgi network. Its function is as follows. Envelope glycoprotein necessary for proper maturation of gM and modulation of its membrane fusion activity. Also plays a critical role in virion morphogenesis. The polypeptide is Envelope glycoprotein N (Equine herpesvirus 2 (strain 86/87) (EHV-2)).